We begin with the raw amino-acid sequence, 288 residues long: Small ribosomal subunit protein uS9m (288 aa).

Positions 269 to 288 (VERKKPGKKKARKMPTWVKR) are disordered.

It belongs to the universal ribosomal protein uS9 family.

It localises to the mitochondrion. The polypeptide is Small ribosomal subunit protein uS9m (MRPS9) (Candida glabrata (strain ATCC 2001 / BCRC 20586 / JCM 3761 / NBRC 0622 / NRRL Y-65 / CBS 138) (Yeast)).